We begin with the raw amino-acid sequence, 212 residues long: Peroxisomal membrane protein 4 (212 aa).

Residue N57 is glycosylated (N-linked (GlcNAc...) asparagine). 2 helical membrane passes run 97–117 (GKTY…LVFG) and 153–173 (WDPF…LFEY). N-linked (GlcNAc...) asparagine glycosylation is present at N206.

It belongs to the peroxisomal membrane protein PXMP2/4 family. Interacts with PEX19. As to expression, expressed in normal prostate epithelial cells, and androgen-sensitive prostate adenocarcinoma cells. Not expressed in androgen-insensitive prostate adenocarcinoma cells.

The protein resides in the peroxisome membrane. This chain is Peroxisomal membrane protein 4 (PXMP4), found in Homo sapiens (Human).